Here is a 445-residue protein sequence, read N- to C-terminus: UDP-N-acetylmuramate--L-alanine ligase (445 aa).

113-119 (GSHGKTS) is an ATP binding site.

It belongs to the MurCDEF family.

It localises to the cytoplasm. The enzyme catalyses UDP-N-acetyl-alpha-D-muramate + L-alanine + ATP = UDP-N-acetyl-alpha-D-muramoyl-L-alanine + ADP + phosphate + H(+). It functions in the pathway cell wall biogenesis; peptidoglycan biosynthesis. Cell wall formation. This is UDP-N-acetylmuramate--L-alanine ligase from Enterococcus faecalis (strain ATCC 700802 / V583).